The following is a 444-amino-acid chain: Structure-specific endonuclease subunit SLX1 (444 aa).

In terms of domain architecture, GIY-YIG spans 23–105 (AFSCCYLLRS…QNTKVSRHAD (83 aa)). Residues 240–295 (CGVCKQRLILQHDIIAVCSHSSCHCAAHLSCLSSHFLKDKDSDSELVPREGTCPTC) form an SLX1-type zinc finger. The interval 324-354 (RRQRAGTPKGQGLKSVRGRGHSEDENESDAL) is disordered.

The protein belongs to the SLX1 family. Forms a heterodimer with SLX4. A divalent metal cation is required as a cofactor.

The protein localises to the nucleus. Functionally, catalytic subunit of the SLX1-SLX4 structure-specific endonuclease that resolves DNA secondary structures generated during DNA repair and recombination. Has endonuclease activity towards branched DNA substrates, introducing single-strand cuts in duplex DNA close to junctions with ss-DNA. This chain is Structure-specific endonuclease subunit SLX1, found in Paracoccidioides lutzii (strain ATCC MYA-826 / Pb01) (Paracoccidioides brasiliensis).